A 1117-amino-acid polypeptide reads, in one-letter code: Guanylate cyclase D (1117 aa).

A signal peptide spans Met1–Ala66. At Arg67–Ser479 the chain is on the extracellular side. A disulfide bridge connects residues Cys121 and Cys149. Residues Leu480 to Ile500 traverse the membrane as a helical segment. Over Arg501–Pro1117 the chain is Cytoplasmic. A disordered region spans residues Thr529 to Gln557. The 272-residue stretch at Ser541–Phe812 folds into the Protein kinase domain. Positions Met874–Leu915 are interaction with NCALD. The Guanylate cyclase domain occupies Thr887–Glu1017. The tract at residues Gly1096–Pro1117 is disordered.

Belongs to the adenylyl cyclase class-4/guanylyl cyclase family. As to quaternary structure, interacts (via the catalytic domain) with NCALD. As to expression, found in a subset of olfactory neurons in the main olfactory epithelium.

The protein localises to the cell projection. The protein resides in the cilium membrane. The catalysed reaction is GTP = 3',5'-cyclic GMP + diphosphate. Activated by Ca(2+). Functions as an olfactory receptor activated by urine odorants, uroguanylin and guanylin and as well by the volatile semiochemicals carbon disulfide (CS2) and carbon dioxide (CO2). Has guanylate cyclase activity upon binding of the ligand. Activation of GUCY2D neurons leads to the cGMP-dependent activation of the CNGA3 channels, membrane depolarization and an increase in action potential frequency. Signaling pathways activated by GUCY2D may trigger social behaviors such as acquisition of food preference. In Mus musculus (Mouse), this protein is Guanylate cyclase D.